A 283-amino-acid chain; its full sequence is Probable replication-associated protein repA1 (283 aa).

This sequence belongs to the IncFII RepA family.

In terms of biological role, this protein is essential for plasmid replication; it is involved in copy control functions. The sequence is that of Probable replication-associated protein repA1 (repA1) from Buchnera aphidicola subsp. Schizaphis graminum (strain Sg).